A 206-amino-acid chain; its full sequence is Large ribosomal subunit protein uL4 (206 aa).

Belongs to the universal ribosomal protein uL4 family. Part of the 50S ribosomal subunit.

Functionally, one of the primary rRNA binding proteins, this protein initially binds near the 5'-end of the 23S rRNA. It is important during the early stages of 50S assembly. It makes multiple contacts with different domains of the 23S rRNA in the assembled 50S subunit and ribosome. In terms of biological role, forms part of the polypeptide exit tunnel. In Cereibacter sphaeroides (strain KD131 / KCTC 12085) (Rhodobacter sphaeroides), this protein is Large ribosomal subunit protein uL4.